A 376-amino-acid polypeptide reads, in one-letter code: MKKIILVAGGTGGHFFPAVALGEELIKRGYEVHFITDLRCKQYIKQDMKVIFHILDLKRSGNIFLFLPRLSIAVLKAIKLLYNMKPSVTVGFGGYPVIAPMFAAIFLRVPIIIHEQNSYLGKVNKFFASFAKKIAISYEKIKNLPEFAKSKIVVTGGVVRENIRELKVIEMSSRGLTTGSKKSLIKALDSVVKPRNDKLFTIFIFGGSQGAKLFSELIPASIQILMQKQPSLELNIIQQAALDDQVKIKDIYSKLNITYEFAEFFDNMALQYKEADLVISRAGASTIEELTYIGLPAIFIPLPSAADNHQYYNAQLLEDEKTGWCLEQNNISAGKLADKILDLISNPKILEDASQNLLKRRKEGHKLLSNLIEEVI.

UDP-N-acetyl-alpha-D-glucosamine-binding positions include 11 to 13 (TGG), Asn-117, Arg-160, Ser-208, and Gln-310.

Belongs to the glycosyltransferase 28 family. MurG subfamily.

The protein resides in the cell inner membrane. The enzyme catalyses di-trans,octa-cis-undecaprenyl diphospho-N-acetyl-alpha-D-muramoyl-L-alanyl-D-glutamyl-meso-2,6-diaminopimeloyl-D-alanyl-D-alanine + UDP-N-acetyl-alpha-D-glucosamine = di-trans,octa-cis-undecaprenyl diphospho-[N-acetyl-alpha-D-glucosaminyl-(1-&gt;4)]-N-acetyl-alpha-D-muramoyl-L-alanyl-D-glutamyl-meso-2,6-diaminopimeloyl-D-alanyl-D-alanine + UDP + H(+). It participates in cell wall biogenesis; peptidoglycan biosynthesis. In terms of biological role, cell wall formation. Catalyzes the transfer of a GlcNAc subunit on undecaprenyl-pyrophosphoryl-MurNAc-pentapeptide (lipid intermediate I) to form undecaprenyl-pyrophosphoryl-MurNAc-(pentapeptide)GlcNAc (lipid intermediate II). The sequence is that of UDP-N-acetylglucosamine--N-acetylmuramyl-(pentapeptide) pyrophosphoryl-undecaprenol N-acetylglucosamine transferase from Rickettsia peacockii (strain Rustic).